Here is a 375-residue protein sequence, read N- to C-terminus: Alcohol dehydrogenase 6 (375 aa).

Position 23 is a phosphoserine (serine 23). The Zn(2+) site is built by cysteine 47, histidine 69, cysteine 99, cysteine 102, cysteine 105, cysteine 113, and cysteine 175. Residues 200–205 (GLGGVG), aspartate 224, lysine 229, 293–295 (VGL), and arginine 370 each bind NAD(+).

The protein belongs to the zinc-containing alcohol dehydrogenase family. Class-V subfamily. Dimer. The cofactor is Zn(2+).

Its subcellular location is the cytoplasm. It carries out the reaction a primary alcohol + NAD(+) = an aldehyde + NADH + H(+). The enzyme catalyses a secondary alcohol + NAD(+) = a ketone + NADH + H(+). Its function is as follows. Alcohol dehydrogenase. Catalyzes the NAD-dependent oxidation of primary alcohols to the corresponding aldehydes. Oxidizes secondary alcohols to the corresponding ketones. This chain is Alcohol dehydrogenase 6 (ADH6), found in Pongo abelii (Sumatran orangutan).